Here is a 399-residue protein sequence, read N- to C-terminus: Elongation factor Tu (399 aa).

Residues 10 to 204 enclose the tr-type G domain; it reads KPHVNIGTIG…AVDANIPEPE (195 aa). The interval 19–26 is G1; that stretch reads GHVDHGKT. 19 to 26 serves as a coordination point for GTP; it reads GHVDHGKT. Residue T26 participates in Mg(2+) binding. The interval 60-64 is G2; it reads GITIN. The G3 stretch occupies residues 81–84; that stretch reads DCPG. Residues 81 to 85 and 136 to 139 each bind GTP; these read DCPGH and NKCD. Residues 136–139 form a G4 region; that stretch reads NKCD. Residues 174-176 form a G5 region; it reads SGL.

It belongs to the TRAFAC class translation factor GTPase superfamily. Classic translation factor GTPase family. EF-Tu/EF-1A subfamily. Monomer.

The protein resides in the cytoplasm. The catalysed reaction is GTP + H2O = GDP + phosphate + H(+). In terms of biological role, GTP hydrolase that promotes the GTP-dependent binding of aminoacyl-tRNA to the A-site of ribosomes during protein biosynthesis. This is Elongation factor Tu from Synechococcus sp. (strain WH7803).